Consider the following 1098-residue polypeptide: Bifunctional helicase and thymine dioxygenase JBP2 (1098 aa).

A thymine dioxygenase region spans residues Met-1 to Ala-540. His-415, Asp-417, and His-465 together coordinate Fe cation. Residue Arg-479 coordinates 2-oxoglutarate. The tract at residues Ser-541–Glu-1098 is DNA Helicase. The 176-residue stretch at Val-555–Gly-730 folds into the Helicase ATP-binding domain. Met-568–Thr-575 is a binding site for ATP. Residues Asp-681–His-684 carry the DEAH box motif. The 161-residue stretch at Val-897–Ala-1057 folds into the Helicase C-terminal domain.

The protein in the C-terminal section; belongs to the SNF2/RAD54 helicase family. In the N-terminal section; belongs to the TET family. JBP2 subfamily. Fe(2+) is required as a cofactor.

It localises to the nucleus. It catalyses the reaction ATP + H2O = ADP + phosphate + H(+). The catalysed reaction is thymine + 2-oxoglutarate + O2 = 5-hydroxymethyluracil + succinate + CO2. Functionally, dioxygenase that catalyzes the first step of DNA base J (beta-d-glucosyl-HOMedU) biosynthesis by converting thymine to 5-hydroxymethyluracil (HOMedU). DNA base J is a hypermodified thymidine residue found in the genome of kinetoplastid parasites, which is localized primarily to repetitive DNA, namely the telomeres, and is implicated in the regulation of antigenic variation. Probably also acts as a DNA helicase. Recognizes and binds specific regions of the genome, hydrolyzes ATP and allows the DNA base J de novo synthesis. Involved in initial synthesis of DNA base J, JBP1 being able to act via the basal level of DNA base J and propagate further synthesis. In contrast to JBP1, it does not specifically bind DNA base J, however it binds chromatin. The chain is Bifunctional helicase and thymine dioxygenase JBP2 (JBP2) from Leishmania tarentolae (Sauroleishmania tarentolae).